The primary structure comprises 194 residues: Peptidyl-tRNA hydrolase (194 aa).

Y17 is a binding site for tRNA. H22 serves as the catalytic Proton acceptor. 3 residues coordinate tRNA: Y68, N70, and N116.

The protein belongs to the PTH family. In terms of assembly, monomer.

It is found in the cytoplasm. It catalyses the reaction an N-acyl-L-alpha-aminoacyl-tRNA + H2O = an N-acyl-L-amino acid + a tRNA + H(+). Hydrolyzes ribosome-free peptidyl-tRNAs (with 1 or more amino acids incorporated), which drop off the ribosome during protein synthesis, or as a result of ribosome stalling. Its function is as follows. Catalyzes the release of premature peptidyl moieties from peptidyl-tRNA molecules trapped in stalled 50S ribosomal subunits, and thus maintains levels of free tRNAs and 50S ribosomes. This Pseudomonas putida (strain ATCC 700007 / DSM 6899 / JCM 31910 / BCRC 17059 / LMG 24140 / F1) protein is Peptidyl-tRNA hydrolase.